A 67-amino-acid polypeptide reads, in one-letter code: Large ribosomal subunit protein uL30 (67 aa).

The protein belongs to the universal ribosomal protein uL30 family. In terms of assembly, part of the 50S ribosomal subunit.

The polypeptide is Large ribosomal subunit protein uL30 (Sinorhizobium medicae (strain WSM419) (Ensifer medicae)).